The chain runs to 306 residues: Methylated RNA-binding protein 1 (306 aa).

Positions 155 to 290 constitute a YTH domain; that stretch reads SRFFVIKSSS…SIGISIINLF (136 aa). Residues 161 to 163, Asn-207, and Trp-231 each bind RNA; that span reads KSS.

In terms of biological role, RNA-binding protein that acts as a post-transcriptional regulator of phosphate metabolism by binding to the 3'-UTR region of PHO4 mRNA, decreasing its stability. Acts by recognizing and binding N6-methyladenosine (m6A)-containing RNAs, a modification present at internal sites of mRNAs and some non-coding RNAs. This chain is Methylated RNA-binding protein 1, found in Saccharomyces cerevisiae (strain ATCC 204508 / S288c) (Baker's yeast).